The primary structure comprises 66 residues: DNA gyrase inhibitor YacG (66 aa).

4 residues coordinate Zn(2+): cysteine 9, cysteine 12, cysteine 28, and cysteine 32.

It belongs to the DNA gyrase inhibitor YacG family. Interacts with GyrB. The cofactor is Zn(2+).

Inhibits all the catalytic activities of DNA gyrase by preventing its interaction with DNA. Acts by binding directly to the C-terminal domain of GyrB, which probably disrupts DNA binding by the gyrase. The protein is DNA gyrase inhibitor YacG of Pseudomonas aeruginosa (strain LESB58).